Reading from the N-terminus, the 341-residue chain is Methionine import ATP-binding protein MetN (341 aa).

In terms of domain architecture, ABC transporter spans 2-237 (IELCGLKKSF…PESLARKMLY (236 aa)). 34 to 41 (GKSGAGKS) contacts ATP.

This sequence belongs to the ABC transporter superfamily. Methionine importer (TC 3.A.1.24) family. In terms of assembly, the complex is composed of two ATP-binding proteins (MetN), two transmembrane proteins (MetI) and a solute-binding protein (MetQ).

It is found in the cell inner membrane. The enzyme catalyses L-methionine(out) + ATP + H2O = L-methionine(in) + ADP + phosphate + H(+). It catalyses the reaction D-methionine(out) + ATP + H2O = D-methionine(in) + ADP + phosphate + H(+). Functionally, part of the ABC transporter complex MetNIQ involved in methionine import. Responsible for energy coupling to the transport system. The chain is Methionine import ATP-binding protein MetN from Legionella pneumophila (strain Lens).